Here is a 219-residue protein sequence, read N- to C-terminus: HTH-type transcriptional activator FasR (219 aa).

The segment at 1 to 30 (MSDLANTAERRGEKRPAGGNRRGNRLPRDE) is disordered. In terms of domain architecture, HTH tetR-type spans 29 to 89 (DERRGQLLIA…AVLQRHVDNL (61 aa)). The segment at residues 52 to 71 (GMDEIADRAGVSKPVLYQHF) is a DNA-binding region (H-T-H motif).

In terms of assembly, homodimer.

Its activity is regulated as follows. FasR:DNA binding is regulated by long-chain acyl-CoAs (C14- to C26-CoA), which act as effector molecules that modulate the affinity of FasR for its DNA binding sequences and therefore modulate the expression of the essential fas-acpS operon. Transcriptional activator that plays a central role in sensing mycobacterial long-chain fatty acids and regulating lipid biosynthesis. Activates the expression of the genes encoding the fatty acid synthase (fas) and the 4-phosphopantetheinyl transferase (acpS), whose products are involved in the fatty acid and mycolic acid biosynthesis. Specifically binds to three conserved operator sequences present in the fas-acpS promoter region. Essential for M.smegmatis viability. This is HTH-type transcriptional activator FasR from Mycolicibacterium smegmatis (strain ATCC 700084 / mc(2)155) (Mycobacterium smegmatis).